A 559-amino-acid polypeptide reads, in one-letter code: Thermosome subunit alpha (559 aa).

Basic and acidic residues predominate over residues 535 to 547 (SEKKGGEGSKEES). The segment at 535–559 (SEKKGGEGSKEESGGEGGSTPSLGD) is disordered.

The protein belongs to the TCP-1 chaperonin family. In terms of assembly, forms a Heterooligomeric complex of two stacked eight-membered rings.

Molecular chaperone; binds unfolded polypeptides in vitro, and has a weak ATPase activity. In Saccharolobus solfataricus (strain ATCC 35092 / DSM 1617 / JCM 11322 / P2) (Sulfolobus solfataricus), this protein is Thermosome subunit alpha (thsA).